Here is a 510-residue protein sequence, read N- to C-terminus: ATP synthase subunit alpha (510 aa).

169–176 (GDRQTGKT) is an ATP binding site.

The protein belongs to the ATPase alpha/beta chains family. F-type ATPases have 2 components, CF(1) - the catalytic core - and CF(0) - the membrane proton channel. CF(1) has five subunits: alpha(3), beta(3), gamma(1), delta(1), epsilon(1). CF(0) has three main subunits: a(1), b(2) and c(9-12). The alpha and beta chains form an alternating ring which encloses part of the gamma chain. CF(1) is attached to CF(0) by a central stalk formed by the gamma and epsilon chains, while a peripheral stalk is formed by the delta and b chains.

Its subcellular location is the cell inner membrane. The catalysed reaction is ATP + H2O + 4 H(+)(in) = ADP + phosphate + 5 H(+)(out). Functionally, produces ATP from ADP in the presence of a proton gradient across the membrane. The alpha chain is a regulatory subunit. The polypeptide is ATP synthase subunit alpha (Rickettsia peacockii (strain Rustic)).